The primary structure comprises 396 residues: Acetylornithine aminotransferase 2 (396 aa).

Pyridoxal 5'-phosphate is bound by residues 102–103 (GA) and F134. Residue R137 coordinates N(2)-acetyl-L-ornithine. Residue 219 to 222 (DEVQ) coordinates pyridoxal 5'-phosphate. Residue K248 is modified to N6-(pyridoxal phosphate)lysine. T276 lines the pyridoxal 5'-phosphate pocket.

The protein belongs to the class-III pyridoxal-phosphate-dependent aminotransferase family. ArgD subfamily. In terms of assembly, homodimer. Pyridoxal 5'-phosphate serves as cofactor.

The protein resides in the cytoplasm. The enzyme catalyses N(2)-acetyl-L-ornithine + 2-oxoglutarate = N-acetyl-L-glutamate 5-semialdehyde + L-glutamate. Its pathway is amino-acid biosynthesis; L-arginine biosynthesis; N(2)-acetyl-L-ornithine from L-glutamate: step 4/4. The sequence is that of Acetylornithine aminotransferase 2 from Bordetella pertussis (strain Tohama I / ATCC BAA-589 / NCTC 13251).